Here is a 423-residue protein sequence, read N- to C-terminus: MVSIVLGSQWGDEGKGKITDMLSQDATLCCRAAGGHNAGHTIVHEDVTYDFHILPSGLVSPKCINLIGAGTVFHVPSFFKELAAIEAKGLKGAAQRIFVSDRAHVCFDLHSVVDGLEEKGLGGRKVGTTGKGIGPCYSDKAARRGVRVGEILDEETFERKLRTLDTSYRTRFGDLAYDVEEEIARFKEYRNLLKPHIVDQLEFLQEHKNSPNTLVEGANALMLDLDHGTYPFVTSSSTGLGGAVQALALNPASIKSVIGVVKAYTTRVGSGPFPSEQLNGDGEKLQQVGREFGVTTGRRRRCGWLDLVLCRYSHAINHYTALNLTKLDILDDFDEIKVGVAYILPDGKRTTGTFPADPNVVDKIQVEYVTLPGWKSNTMGVKRYEDLPPNARAYIEFIEREIGGVPVKWIGTGPARDHMIARD.

GTP is bound by residues G11 to K17 and G39 to T41. The Proton acceptor role is filled by D12. Residues D12 and G39 each coordinate Mg(2+). IMP contacts are provided by residues D12–K15, N37–H40, T129, R143, N219, T234, and R298. H40 serves as the catalytic Proton donor. V294–R300 lines the substrate pocket. GTP is bound by residues R300, K326–D328, and G411–G413.

Belongs to the adenylosuccinate synthetase family. In terms of assembly, homodimer. It depends on Mg(2+) as a cofactor.

Its subcellular location is the cytoplasm. The enzyme catalyses IMP + L-aspartate + GTP = N(6)-(1,2-dicarboxyethyl)-AMP + GDP + phosphate + 2 H(+). It functions in the pathway purine metabolism; AMP biosynthesis via de novo pathway; AMP from IMP: step 1/2. Its function is as follows. Plays an important role in the de novo pathway and in the salvage pathway of purine nucleotide biosynthesis. Catalyzes the first committed step in the biosynthesis of AMP from IMP. The protein is Adenylosuccinate synthetase of Penicillium rubens (strain ATCC 28089 / DSM 1075 / NRRL 1951 / Wisconsin 54-1255) (Penicillium chrysogenum).